Reading from the N-terminus, the 205-residue chain is Pyridoxal 5'-phosphate synthase subunit PdxT (205 aa).

54–56 serves as a coordination point for L-glutamine; it reads GES. Cysteine 86 (nucleophile) is an active-site residue. L-glutamine is bound by residues arginine 118 and 147–148; that span reads IR. Active-site charge relay system residues include histidine 183 and glutamate 185.

The protein belongs to the glutaminase PdxT/SNO family. In terms of assembly, in the presence of PdxS, forms a dodecamer of heterodimers. Only shows activity in the heterodimer.

The enzyme catalyses aldehydo-D-ribose 5-phosphate + D-glyceraldehyde 3-phosphate + L-glutamine = pyridoxal 5'-phosphate + L-glutamate + phosphate + 3 H2O + H(+). It catalyses the reaction L-glutamine + H2O = L-glutamate + NH4(+). The protein operates within cofactor biosynthesis; pyridoxal 5'-phosphate biosynthesis. In terms of biological role, catalyzes the hydrolysis of glutamine to glutamate and ammonia as part of the biosynthesis of pyridoxal 5'-phosphate. The resulting ammonia molecule is channeled to the active site of PdxS. The polypeptide is Pyridoxal 5'-phosphate synthase subunit PdxT (Nitrosopumilus maritimus (strain SCM1)).